Reading from the N-terminus, the 393-residue chain is NAD(P)H-quinone oxidoreductase subunit H, chloroplastic (393 aa).

The protein belongs to the complex I 49 kDa subunit family. In terms of assembly, NDH is composed of at least 16 different subunits, 5 of which are encoded in the nucleus.

It localises to the plastid. The protein resides in the chloroplast thylakoid membrane. The catalysed reaction is a plastoquinone + NADH + (n+1) H(+)(in) = a plastoquinol + NAD(+) + n H(+)(out). It catalyses the reaction a plastoquinone + NADPH + (n+1) H(+)(in) = a plastoquinol + NADP(+) + n H(+)(out). Functionally, NDH shuttles electrons from NAD(P)H:plastoquinone, via FMN and iron-sulfur (Fe-S) centers, to quinones in the photosynthetic chain and possibly in a chloroplast respiratory chain. The immediate electron acceptor for the enzyme in this species is believed to be plastoquinone. Couples the redox reaction to proton translocation, and thus conserves the redox energy in a proton gradient. This Lepidium virginicum (Virginia pepperweed) protein is NAD(P)H-quinone oxidoreductase subunit H, chloroplastic.